Consider the following 421-residue polypeptide: uncharacterized protein (421 aa).

An N6-(pyridoxal phosphate)lysine modification is found at Lys249.

Belongs to the class-I pyridoxal-phosphate-dependent aminotransferase family. Pyridoxal 5'-phosphate serves as cofactor.

It is found in the cytoplasm. This is an uncharacterized protein from Schizosaccharomyces pombe (strain 972 / ATCC 24843) (Fission yeast).